A 214-amino-acid chain; its full sequence is uncharacterized protein (214 aa).

A Response regulatory domain is found at 2-118; it reads KIVIADDHHV…ELVKTRQVHG (117 aa). Asp53 bears the 4-aspartylphosphate mark. The 66-residue stretch at 142–207 folds into the HTH luxR-type domain; it reads EKEKYYQLTR…QAALFAVKYN (66 aa). The segment at residues 166–185 is a DNA-binding region (H-T-H motif); the sequence is NKEIAAALFISEKTVKTHVS.

In terms of processing, phosphorylated by YhcY.

The protein localises to the cytoplasm. Member of the two-component regulatory system YhcY/YhcZ. This is an uncharacterized protein from Bacillus subtilis (strain 168).